Reading from the N-terminus, the 429-residue chain is Histidine--tRNA ligase (429 aa).

This sequence belongs to the class-II aminoacyl-tRNA synthetase family. Homodimer.

The protein localises to the cytoplasm. The enzyme catalyses tRNA(His) + L-histidine + ATP = L-histidyl-tRNA(His) + AMP + diphosphate + H(+). The sequence is that of Histidine--tRNA ligase from Streptococcus pneumoniae serotype 4 (strain ATCC BAA-334 / TIGR4).